The primary structure comprises 236 residues: Uridylate kinase (236 aa).

8–11 (KLSG) is an ATP binding site. Residues 16–21 (GEQGYG) are involved in allosteric activation by GTP. Gly51 and Arg55 together coordinate ATP. UMP contacts are provided by residues Asp70 and 131–138 (TGNPYFST). Positions 159, 165, and 168 each coordinate ATP.

It belongs to the UMP kinase family. As to quaternary structure, homohexamer.

Its subcellular location is the cytoplasm. The enzyme catalyses UMP + ATP = UDP + ADP. It functions in the pathway pyrimidine metabolism; CTP biosynthesis via de novo pathway; UDP from UMP (UMPK route): step 1/1. With respect to regulation, allosterically activated by GTP. Inhibited by UTP. Its function is as follows. Catalyzes the reversible phosphorylation of UMP to UDP. In Shouchella clausii (strain KSM-K16) (Alkalihalobacillus clausii), this protein is Uridylate kinase.